We begin with the raw amino-acid sequence, 460 residues long: MFS-type transporter PUL3 (460 aa).

A run of 8 helical transmembrane segments spans residues 16–36, 50–70, 81–101, 113–133, 151–171, 181–201, 240–260, and 271–291; these read AVTL…SSVV, YLFI…FIIG, WVII…SCAG, IICG…TAIS, GICM…DFTV, APTF…MFVL, MFLS…FLTL, and VAFM…PDLV. The tract at residues 300–323 is disordered; it reads PSTQDETDTSDNDKIEKEESEQKS. Residues 310 to 323 show a composition bias toward basic and acidic residues; that stretch reads DNDKIEKEESEQKS. A run of 4 helical transmembrane segments spans residues 333–353, 369–389, 408–428, and 433–453; these read VSLT…MIGA, IFFT…GSSV, FIGA…AALY, and GLPI…PSLV.

This sequence belongs to the major facilitator superfamily. TCR/Tet family.

It localises to the cell membrane. In terms of biological role, MFS-type transporer required for the uptake of iron via the uptake of the siderophore pulcherrimin-iron complex. The polypeptide is MFS-type transporter PUL3 (Kluyveromyces lactis (strain ATCC 8585 / CBS 2359 / DSM 70799 / NBRC 1267 / NRRL Y-1140 / WM37) (Yeast)).